The primary structure comprises 254 residues: MPHDNRLQTNTLAAQAAELPPAWQAALQAPAVARALAGVIAHIEQRLAEGAVVYPATPFRALQGLSPADVRVVILGQDPYHGPGQAQGLAFSVPDDCKRPPSLRNIFSQIAQEFTGAPLPRGNDLTRWTRQGVLLLNTSLTVEDGQPASHARRGWETVTDALISLVARDSTPKAFLLWGAHAQAKQVLLPDHSGHLVLKANHPSPLSARRPPAPFLGCGHFARVNAWLAEQGKTPIDWITEENEGDVRQGEFGL.

Asp-78 serves as the catalytic Proton acceptor.

The protein belongs to the uracil-DNA glycosylase (UDG) superfamily. UNG family.

The protein localises to the cytoplasm. It carries out the reaction Hydrolyzes single-stranded DNA or mismatched double-stranded DNA and polynucleotides, releasing free uracil.. In terms of biological role, excises uracil residues from the DNA which can arise as a result of misincorporation of dUMP residues by DNA polymerase or due to deamination of cytosine. This is Uracil-DNA glycosylase from Bordetella petrii (strain ATCC BAA-461 / DSM 12804 / CCUG 43448).